A 378-amino-acid chain; its full sequence is MSGSDKLPGLASDAVLKQSIPVPDSFVEIKGIDYSKDSAYNMKAVDLIESMKNMGFQASSVSQACEIINGMRSWRGKHIDSLPEHERTGEFDDEGYQKSTIFMGYTSNLISSGLRDTLRFLVQHKMVSAIVSSAGGIEEDLIKVLAPTYMGEFSLPGKGLRDQGMNRIGNLLVPNDNYCKFEEWIVPILDKCLEEQEEGMKKMGSDGLNADSPACWTPSKLINRLGKEINDESSVLYWAHKNDIPVFCPALTDGSIGDMLFFHTFKASPQQIRLDIVADIRKLNSMSMAASNAGMILLGGGLIKHHICNACLMRNGADYAVYINTGQEFDGSDAGARPDEAISWGKIKAEAKQVKVYADASIVFPLIVAATFASEKPN.

Residues 107 to 111 (SNLIS), 133 to 135 (SAG), Glu139, and Asp253 each bind NAD(+). Position 138–139 (138–139 (EE)) interacts with spermidine. Asp258 serves as a coordination point for spermidine. Gly300 contributes to the NAD(+) binding site. His305 lines the spermidine pocket. 325 to 326 (TG) contributes to the NAD(+) binding site. Residues 331–333 (GSD) and 340–346 (EAISWGK) contribute to the spermidine site. The active-site Nucleophile is Lys346. 359–360 (DA) serves as a coordination point for NAD(+).

This sequence belongs to the deoxyhypusine synthase family. NAD(+) serves as cofactor.

The enzyme catalyses [eIF5A protein]-L-lysine + spermidine = [eIF5A protein]-deoxyhypusine + propane-1,3-diamine. It participates in protein modification; eIF5A hypusination. Catalyzes the NAD-dependent oxidative cleavage of spermidine and the subsequent transfer of the butylamine moiety of spermidine to the epsilon-amino group of a specific lysine residue of the eIF-5A precursor protein to form the intermediate deoxyhypusine residue. This is Deoxyhypusine synthase (DYS1) from Debaryomyces hansenii (strain ATCC 36239 / CBS 767 / BCRC 21394 / JCM 1990 / NBRC 0083 / IGC 2968) (Yeast).